The following is a 304-amino-acid chain: Heme A synthase (304 aa).

Topologically, residues 1-8 (MFNKRNLK) are cytoplasmic. The helical transmembrane segment at 9–29 (WLSVLATIIMAFVQLGGALVT) threads the bilayer. At 30 to 67 (KTGSEDGCGSSWPLCHGALLPQNLPIDTIIELSHRAVS) the chain is on the extracellular side. Cysteine 37 and cysteine 44 are oxidised to a cystine. Glutamate 60 is an active-site residue. Histidine 63 serves as a coordination point for heme o. A helical membrane pass occupies residues 68–88 (GLSLIVVLWLAITAWKHIGYI). Residues 89-93 (REVKP) lie on the Cytoplasmic side of the membrane. The chain crosses the membrane as a helical span at residues 94-114 (LAIISIAFLLVQALIGAAAVI). Residues 115-123 (WQQNSYVLA) lie on the Extracellular side of the membrane. Residues 124–144 (LHFGISLISFSSVFVLMLIIF) traverse the membrane as a helical segment. Histidine 125 serves as a coordination point for heme o. The Cytoplasmic segment spans residues 145-163 (EVDKKYEADELYIRKPLRR). A helical membrane pass occupies residues 164–184 (LTWIMTGIVYLTIYTGALVRH). Over 185–215 (AKASLAYGGWPLPFHDIIPHTEQDWVQFAHR) the chain is Extracellular. Residue histidine 214 coordinates heme b. A helical membrane pass occupies residues 216 to 236 (GMAFITFFWIMITFIHAVKNY). Residues 237 to 244 (SENRTIRY) are Cytoplasmic-facing. Residues 245 to 265 (GYTTAFILIILQVITGALSVM) form a helical membrane-spanning segment. Topologically, residues 266–270 (TNVNL) are extracellular. Residues 271–291 (FIALLHALFITILFGMIAYFI) traverse the membrane as a helical segment. Histidine 276 contributes to the heme b binding site. Over 292 to 304 (MLMLRTIRSEKIK) the chain is Cytoplasmic.

It belongs to the COX15/CtaA family. Type 1 subfamily. As to quaternary structure, interacts with CtaB. It depends on heme b as a cofactor.

It is found in the cell membrane. The enzyme catalyses Fe(II)-heme o + 2 A + H2O = Fe(II)-heme a + 2 AH2. It functions in the pathway porphyrin-containing compound metabolism; heme A biosynthesis; heme A from heme O: step 1/1. Catalyzes the conversion of heme O to heme A by two successive hydroxylations of the methyl group at C8. The first hydroxylation forms heme I, the second hydroxylation results in an unstable dihydroxymethyl group, which spontaneously dehydrates, resulting in the formyl group of heme A. The sequence is that of Heme A synthase from Staphylococcus haemolyticus (strain JCSC1435).